The chain runs to 249 residues: Cytochrome c oxidase subunit 2 (249 aa).

The next 2 membrane-spanning stretches (helical) occupy residues 40 to 60 (NIMF…YTIT) and 81 to 101 (IIWT…SFIL). Cu cation-binding residues include His-184, Cys-219, Glu-221, Cys-223, His-227, and Met-230. Residue Glu-221 coordinates Mg(2+).

The protein belongs to the cytochrome c oxidase subunit 2 family. As to quaternary structure, component of the cytochrome c oxidase (complex IV, CIV), a multisubunit enzyme composed of a catalytic core of 3 subunits and several supernumerary subunits. The complex exists as a monomer or a dimer and forms supercomplexes (SCs) in the inner mitochondrial membrane with ubiquinol-cytochrome c oxidoreductase (cytochrome b-c1 complex, complex III, CIII). It depends on Cu cation as a cofactor.

It localises to the mitochondrion inner membrane. It carries out the reaction 4 Fe(II)-[cytochrome c] + O2 + 8 H(+)(in) = 4 Fe(III)-[cytochrome c] + 2 H2O + 4 H(+)(out). In terms of biological role, component of the cytochrome c oxidase, the last enzyme in the mitochondrial electron transport chain which drives oxidative phosphorylation. The respiratory chain contains 3 multisubunit complexes succinate dehydrogenase (complex II, CII), ubiquinol-cytochrome c oxidoreductase (cytochrome b-c1 complex, complex III, CIII) and cytochrome c oxidase (complex IV, CIV), that cooperate to transfer electrons derived from NADH and succinate to molecular oxygen, creating an electrochemical gradient over the inner membrane that drives transmembrane transport and the ATP synthase. Cytochrome c oxidase is the component of the respiratory chain that catalyzes the reduction of oxygen to water. Electrons originating from reduced cytochrome c in the intermembrane space (IMS) are transferred via the dinuclear copper A center (CU(A)) of subunit 2 and heme A of subunit 1 to the active site in subunit 1, a binuclear center (BNC) formed by heme A3 and copper B (CU(B)). The BNC reduces molecular oxygen to 2 water molecules using 4 electrons from cytochrome c in the IMS and 4 protons from the mitochondrial matrix. In Vanderwaltozyma polyspora (strain ATCC 22028 / DSM 70294 / BCRC 21397 / CBS 2163 / NBRC 10782 / NRRL Y-8283 / UCD 57-17) (Kluyveromyces polysporus), this protein is Cytochrome c oxidase subunit 2 (COX2).